Consider the following 256-residue polypeptide: DNA repair protein RecO (256 aa).

The protein belongs to the RecO family.

Functionally, involved in DNA repair and RecF pathway recombination. In Streptococcus equi subsp. zooepidemicus (strain MGCS10565), this protein is DNA repair protein RecO.